An 839-amino-acid polypeptide reads, in one-letter code: Katanin p80 WD40 repeat-containing subunit B1 homolog KTN80.3 (839 aa).

WD repeat units follow at residues 14–54 (AHSA…AILS), 57–96 (GHSS…VVRT), 99–138 (GHRS…CIHT), 141–182 (GHTR…HEFK), 184–222 (HEGK…LIGS), 225–265 (TETT…DGVD), and 267–304 (GWSN…TEPM). The short motif at 115 to 131 (FFASGSLDTNLKIWDIR) is the DWD box element. Disordered regions lie at residues 303-340 (PMSG…LGKL), 357-435 (GKLS…KSAS), 501-561 (LQSK…RTNK), and 575-648 (SLVR…PSNM). Polar residues-rich tracts occupy residues 307–334 (GATQ…NSSK), 375–385 (TGRSSVSQSSD), 411–435 (TLSS…KSAS), 501–533 (LQSK…QSQP), 589–602 (DLIS…SSPT), and 630–648 (VSSS…PSNM).

It belongs to the WD repeat KATNB1 family. Component of KTN80-KTN1 complexes composed of a hexamer of KTN1-KTN80 heterodimers that sense microtubule (MT) geometry to confer precise MT severing. Interacts directly with AAA1/KTN1 and KTN80.1, and weakly with KTN80.4. As to expression, expressed in siliques, flowers, leaves, stems and roots.

It localises to the cytoplasm. The protein localises to the cytoskeleton. In terms of biological role, may participate in a complex which severs microtubules in an ATP-dependent manner. Microtubule severing may promote rapid reorganization of cellular microtubule arrays. Confers precision to microtubule (MT) severing by specific targeting of KTN1 to MT cleavage sites such as crossover or branching nucleation sites. Together with other KTN80s, regulates cell elongation by modulating MT organization. This chain is Katanin p80 WD40 repeat-containing subunit B1 homolog KTN80.3, found in Arabidopsis thaliana (Mouse-ear cress).